A 158-amino-acid polypeptide reads, in one-letter code: Small ribosomal subunit protein uS19 (158 aa).

It belongs to the universal ribosomal protein uS19 family.

Protein S19 forms a complex with S13 that binds strongly to the 16S ribosomal RNA. This Pyrobaculum calidifontis (strain DSM 21063 / JCM 11548 / VA1) protein is Small ribosomal subunit protein uS19.